We begin with the raw amino-acid sequence, 442 residues long: Decapping and exoribonuclease protein 1 (442 aa).

The span at 31–40 (QSKLCKEKTT) shows a compositional bias: basic and acidic residues. Positions 31–56 (QSKLCKEKTTSDSSSSRKPSQQRDNY) are disordered. Positions 41–53 (SDSSSSRKPSQQR) are enriched in low complexity. Position 101 (R101) interacts with substrate. E255 is a binding site for a divalent metal cation. A substrate-binding site is contributed by E293. The a divalent metal cation site is built by D295, E306, and L307. Residues K308 and Q330 each coordinate substrate.

It belongs to the DXO/Dom3Z family. The cofactor is a divalent metal cation.

The protein localises to the cytoplasm. The enzyme catalyses a 5'-end NAD(+)-phospho-ribonucleoside in mRNA + H2O = a 5'-end phospho-ribonucleoside in mRNA + NAD(+) + H(+). It carries out the reaction a 5'-end (N(7)-methyl 5'-triphosphoguanosine)-ribonucleoside-ribonucleotide in mRNA + H2O = a (N(7)-methyl 5'-triphosphoguanosine)-nucleoside + a 5'-end phospho-ribonucleoside in mRNA + H(+). In terms of biological role, decapping enzyme for NAD-capped RNAs: specifically hydrolyzes the nicotinamide adenine dinucleotide (NAD) cap from a subset of RNAs by removing the entire NAD moiety from the 5'-end of an NAD-capped RNA. The NAD-cap is present at the 5'-end of some RNAs and snoRNAs. In contrast to the canonical 5'-end N7 methylguanosine (m7G) cap, the NAD cap promotes mRNA decay. Also acts as a non-canonical decapping enzyme that removes the entire cap structure of m7G capped or incompletely capped RNAs. Has decapping activity toward incomplete 5'-end m7G cap mRNAs such as unmethylated 5'-end-capped RNA (cap0), while it has no activity toward 2'-O-ribose methylated m7G cap (cap1). Also has 5'-3' exonuclease activity. This Saccharomyces cerevisiae (strain ATCC 204508 / S288c) (Baker's yeast) protein is Decapping and exoribonuclease protein 1 (DXO1).